Reading from the N-terminus, the 152-residue chain is Large ribosomal subunit protein uL22 (152 aa).

The protein belongs to the universal ribosomal protein uL22 family. As to quaternary structure, part of the 50S ribosomal subunit.

This protein binds specifically to 23S rRNA. It makes multiple contacts with different domains of the 23S rRNA in the assembled 50S subunit and ribosome. Its function is as follows. The globular domain of the protein is located near the polypeptide exit tunnel on the outside of the subunit, while an extended beta-hairpin is found that lines the wall of the exit tunnel in the center of the 70S ribosome. The chain is Large ribosomal subunit protein uL22 from Cenarchaeum symbiosum (strain A).